Consider the following 230-residue polypeptide: MKDAKELKLMTLEDVLSQIENGMTIGIGTGSTIELLIPQIAELIQQKNYTITGVCTSNKTAFLAKELAMNIVDVNDVEKIDLAIDGADEVDSALNLIKGGGGALFREKVIDEMADRFVVVVDESKLVNYLGETFALPVEVDKFNWYQVAKKIERTYDIHVSRRVNEDVPFITDNGNYILDCSLQNRIPAYELHEFLIHLTGVLETGYFLDIADQVIVGTQEGVKILNKET.

Substrate-binding positions include threonine 29–threonine 32, aspartate 85–aspartate 88, and lysine 98–glycine 101. Glutamate 107 (proton acceptor) is an active-site residue. A substrate-binding site is contributed by lysine 125.

Belongs to the ribose 5-phosphate isomerase family. As to quaternary structure, homodimer.

The catalysed reaction is aldehydo-D-ribose 5-phosphate = D-ribulose 5-phosphate. Its pathway is carbohydrate degradation; pentose phosphate pathway; D-ribose 5-phosphate from D-ribulose 5-phosphate (non-oxidative stage): step 1/1. Its function is as follows. Catalyzes the reversible conversion of ribose-5-phosphate to ribulose 5-phosphate. This chain is Ribose-5-phosphate isomerase A, found in Staphylococcus epidermidis (strain ATCC 35984 / DSM 28319 / BCRC 17069 / CCUG 31568 / BM 3577 / RP62A).